The sequence spans 420 residues: UDP-N-acetylglucosamine 1-carboxyvinyltransferase (420 aa).

22-23 (KN) is a binding site for phosphoenolpyruvate. Residue Arg92 participates in UDP-N-acetyl-alpha-D-glucosamine binding. Cys116 serves as the catalytic Proton donor. A 2-(S-cysteinyl)pyruvic acid O-phosphothioketal modification is found at Cys116. Residues 121–125 (RPIDL), Asp307, and Leu329 contribute to the UDP-N-acetyl-alpha-D-glucosamine site.

Belongs to the EPSP synthase family. MurA subfamily.

It localises to the cytoplasm. The catalysed reaction is phosphoenolpyruvate + UDP-N-acetyl-alpha-D-glucosamine = UDP-N-acetyl-3-O-(1-carboxyvinyl)-alpha-D-glucosamine + phosphate. It participates in cell wall biogenesis; peptidoglycan biosynthesis. Its function is as follows. Cell wall formation. Adds enolpyruvyl to UDP-N-acetylglucosamine. In Nitratiruptor sp. (strain SB155-2), this protein is UDP-N-acetylglucosamine 1-carboxyvinyltransferase.